A 125-amino-acid polypeptide reads, in one-letter code: Small ribosomal subunit protein eS6 (125 aa).

It belongs to the eukaryotic ribosomal protein eS6 family. In terms of assembly, part of the 30S ribosomal subunit.

The sequence is that of Small ribosomal subunit protein eS6 from Thermococcus kodakarensis (strain ATCC BAA-918 / JCM 12380 / KOD1) (Pyrococcus kodakaraensis (strain KOD1)).